The chain runs to 89 residues: Small ribosomal subunit protein uS15 (89 aa).

The protein belongs to the universal ribosomal protein uS15 family. As to quaternary structure, part of the 30S ribosomal subunit. Forms a bridge to the 50S subunit in the 70S ribosome, contacting the 23S rRNA.

Functionally, one of the primary rRNA binding proteins, it binds directly to 16S rRNA where it helps nucleate assembly of the platform of the 30S subunit by binding and bridging several RNA helices of the 16S rRNA. In terms of biological role, forms an intersubunit bridge (bridge B4) with the 23S rRNA of the 50S subunit in the ribosome. The chain is Small ribosomal subunit protein uS15 from Heliobacterium modesticaldum (strain ATCC 51547 / Ice1).